We begin with the raw amino-acid sequence, 302 residues long: Aspartate carbamoyltransferase catalytic subunit (302 aa).

Carbamoyl phosphate is bound by residues Arg-55 and Thr-56. Residue Lys-83 participates in L-aspartate binding. Positions 105, 133, and 136 each coordinate carbamoyl phosphate. L-aspartate contacts are provided by Arg-166 and Arg-222. 2 residues coordinate carbamoyl phosphate: Gly-262 and Pro-263.

Belongs to the aspartate/ornithine carbamoyltransferase superfamily. ATCase family. Heterododecamer (2C3:3R2) of six catalytic PyrB chains organized as two trimers (C3), and six regulatory PyrI chains organized as three dimers (R2).

It catalyses the reaction carbamoyl phosphate + L-aspartate = N-carbamoyl-L-aspartate + phosphate + H(+). It functions in the pathway pyrimidine metabolism; UMP biosynthesis via de novo pathway; (S)-dihydroorotate from bicarbonate: step 2/3. Functionally, catalyzes the condensation of carbamoyl phosphate and aspartate to form carbamoyl aspartate and inorganic phosphate, the committed step in the de novo pyrimidine nucleotide biosynthesis pathway. The sequence is that of Aspartate carbamoyltransferase catalytic subunit from Solibacter usitatus (strain Ellin6076).